Reading from the N-terminus, the 137-residue chain is KYDERTESVHEVNETDYEQCNTVGKEHVLFNDGNTKVMLTKSGFRHFISGNQSHCQMGLKLMVVVMSNNTKKKLIHSPSPSSPSPSPSPSPSPSPSPSPSLSSPSPSPLPNNQGVTRSSGAEFIGVMMWLGVMMLLL.

Positions 1 to 67 constitute a Phytocyanin domain; sequence KYDERTESVH…GLKLMVVVMS (67 aa). 3 N-linked (GlcNAc...) asparagine glycosylation sites follow: asparagine 13, asparagine 51, and asparagine 68. Residues cysteine 20 and cysteine 55 are joined by a disulfide bond. Residues 70–115 are disordered; it reads TKKKLIHSPSPSSPSPSPSPSPSPSPSPSPSLSSPSPSPLPNNQGV. Positions 80–98 are enriched in pro residues; it reads PSSPSPSPSPSPSPSPSPS.

Belongs to the early nodulin-like (ENODL) family.

The protein localises to the symbiosome. It is found in the peribacteroid membrane. May act as a carbohydrate transporter. The protein is Early nodulin-55-1 of Glycine max (Soybean).